We begin with the raw amino-acid sequence, 328 residues long: Probable voltage-gated potassium channel subunit beta (328 aa).

Residues Trp21, Gln27, and Asp49 each coordinate NADP(+). The active-site Proton donor/acceptor is the Tyr54. Residues Ser152, Gln178, Trp207, Ser208, Pro209, Leu210, Ala211, Lys218, Arg229, Gly285, Thr287, Gln291, Glu294, and Asn295 each coordinate NADP(+).

Belongs to the shaker potassium channel beta subunit family. In terms of assembly, forms heteromultimeric complexes with potassium channel alpha subunits. As to expression, expressed in roots, leaves and flowers (at protein level).

Its function is as follows. Probable accessory potassium channel protein which modulates the activity of the pore-forming alpha subunit. In Arabidopsis thaliana (Mouse-ear cress), this protein is Probable voltage-gated potassium channel subunit beta (KAB1).